We begin with the raw amino-acid sequence, 215 residues long: Thiamine-phosphate synthase (215 aa).

Residues 40-44 and Asn72 each bind 4-amino-2-methyl-5-(diphosphooxymethyl)pyrimidine; that span reads QLRIK. Asp73 and Asp92 together coordinate Mg(2+). Residue Ser111 participates in 4-amino-2-methyl-5-(diphosphooxymethyl)pyrimidine binding. 137-139 contributes to the 2-[(2R,5Z)-2-carboxy-4-methylthiazol-5(2H)-ylidene]ethyl phosphate binding site; that stretch reads TTT. Residue Lys140 participates in 4-amino-2-methyl-5-(diphosphooxymethyl)pyrimidine binding. 2-[(2R,5Z)-2-carboxy-4-methylthiazol-5(2H)-ylidene]ethyl phosphate contacts are provided by residues Gly169 and 189–190; that span reads VS.

This sequence belongs to the thiamine-phosphate synthase family. The cofactor is Mg(2+).

It carries out the reaction 2-[(2R,5Z)-2-carboxy-4-methylthiazol-5(2H)-ylidene]ethyl phosphate + 4-amino-2-methyl-5-(diphosphooxymethyl)pyrimidine + 2 H(+) = thiamine phosphate + CO2 + diphosphate. The enzyme catalyses 2-(2-carboxy-4-methylthiazol-5-yl)ethyl phosphate + 4-amino-2-methyl-5-(diphosphooxymethyl)pyrimidine + 2 H(+) = thiamine phosphate + CO2 + diphosphate. It catalyses the reaction 4-methyl-5-(2-phosphooxyethyl)-thiazole + 4-amino-2-methyl-5-(diphosphooxymethyl)pyrimidine + H(+) = thiamine phosphate + diphosphate. It functions in the pathway cofactor biosynthesis; thiamine diphosphate biosynthesis; thiamine phosphate from 4-amino-2-methyl-5-diphosphomethylpyrimidine and 4-methyl-5-(2-phosphoethyl)-thiazole: step 1/1. In terms of biological role, condenses 4-methyl-5-(beta-hydroxyethyl)thiazole monophosphate (THZ-P) and 2-methyl-4-amino-5-hydroxymethyl pyrimidine pyrophosphate (HMP-PP) to form thiamine monophosphate (TMP). The polypeptide is Thiamine-phosphate synthase (Proteus mirabilis (strain HI4320)).